The following is a 91-amino-acid chain: ATP synthase epsilon chain (91 aa).

The protein belongs to the ATPase epsilon chain family. As to quaternary structure, F-type ATPases have 2 components, CF(1) - the catalytic core - and CF(0) - the membrane proton channel. CF(1) has five subunits: alpha(3), beta(3), gamma(1), delta(1), epsilon(1). CF(0) has three main subunits: a, b and c.

It localises to the cell membrane. Functionally, produces ATP from ADP in the presence of a proton gradient across the membrane. The protein is ATP synthase epsilon chain (atpC) of Micrococcus luteus (strain ATCC 4698 / DSM 20030 / JCM 1464 / CCM 169 / CCUG 5858 / IAM 1056 / NBRC 3333 / NCIMB 9278 / NCTC 2665 / VKM Ac-2230) (Micrococcus lysodeikticus).